We begin with the raw amino-acid sequence, 154 residues long: D-ribose pyranase 2 (154 aa).

Residue His-20 is the Proton donor of the active site. Residues Asp-28, His-98, and 121-123 (WGN) each bind substrate.

This sequence belongs to the RbsD / FucU family. RbsD subfamily. As to quaternary structure, homodecamer.

The protein resides in the cytoplasm. It carries out the reaction beta-D-ribopyranose = beta-D-ribofuranose. It participates in carbohydrate metabolism; D-ribose degradation; D-ribose 5-phosphate from beta-D-ribopyranose: step 1/2. Its function is as follows. Catalyzes the interconversion of beta-pyran and beta-furan forms of D-ribose. The sequence is that of D-ribose pyranase 2 from Rubrobacter xylanophilus (strain DSM 9941 / JCM 11954 / NBRC 16129 / PRD-1).